A 314-amino-acid chain; its full sequence is MSEPVGRAVLIAGPTASGKSGLALALAEKLGGEIVNADSMQLYREMRVLTARPSEEEEARVPHHLYGVTAASAPLSAGRWAVLAAEKMREIAARGRLPVVVGGTGLYFRALIEGLAPIPAIPDDVRAAVRAEVGDAGPHAHALLAEADPALAATIRPSDLQRIARGIEVARATGRPLSAWQQIPPEPLVSGTFAKIMLMPDRAWLQARCDRRFDLMLEEGALEEAAAMTALGLDPALPAAKALGLRPLMRHLAGEITLEEAAAAGKAETRAYAKRQETWLRTQMIAWKGFSTQHSESLNAEILSFIDDLGLTRS.

13 to 20 is an ATP binding site; that stretch reads GPTASGKS. 15–20 contributes to the substrate binding site; sequence TASGKS. Interaction with substrate tRNA regions lie at residues 38–41 and 161–165; these read DSMQ and QRIAR.

Belongs to the IPP transferase family. Monomer. Mg(2+) is required as a cofactor.

It carries out the reaction adenosine(37) in tRNA + dimethylallyl diphosphate = N(6)-dimethylallyladenosine(37) in tRNA + diphosphate. Functionally, catalyzes the transfer of a dimethylallyl group onto the adenine at position 37 in tRNAs that read codons beginning with uridine, leading to the formation of N6-(dimethylallyl)adenosine (i(6)A). The sequence is that of tRNA dimethylallyltransferase from Parvibaculum lavamentivorans (strain DS-1 / DSM 13023 / NCIMB 13966).